Reading from the N-terminus, the 662-residue chain is Potassium channel KAT3 (662 aa).

Topologically, residues 1-90 are cytoplasmic; sequence MSTTTTEARS…HFDRRYRLWE (90 aa). Residues 91-111 form a helical membrane-spanning segment; the sequence is LFLVILVGYSAWASLFELAFE. Topologically, residues 112-118 are extracellular; the sequence is KAAEGAL. Residues 119-139 form a helical membrane-spanning segment; sequence LTIDLVVDFFFAVDIILTFFV. The Cytoplasmic segment spans residues 140–163; sequence SYLDNTTYLNVTDHKLIAKRYLKS. The chain crosses the membrane as a helical span at residues 164-184; it reads VAFVMDVASTLPIQFIYKTIT. Over 185-194 the chain is Extracellular; sequence GDVGRGQAFG. A helical; Voltage-sensor transmembrane segment spans residues 195-215; it reads FLNLLRLWRLRRVAELFKRLE. Topologically, residues 216-229 are cytoplasmic; it reads KDAHFNYFVIRVIK. Residues 230–250 traverse the membrane as a helical segment; sequence LLCVTIFWIHLAGCILYWIAY. At 251–277 the chain is on the extracellular side; that stretch reads HYPRPTDTWIGSQVEDFKERSVWLGYT. Residues 278 to 297 constitute an intramembrane region (pore-forming); sequence YSMYWSIVTLTTVGYGDLHA. At 298–301 the chain is on the extracellular side; it reads VNSR. Residues 302-322 traverse the membrane as a helical segment; that stretch reads EKTFNMFYMLFNIGLTSYIIG. The Cytoplasmic segment spans residues 323–662; the sequence is IMTNLVVHGA…LRENDHLYIF (340 aa). Position 406–527 (406–527) interacts with a nucleoside 3',5'-cyclic phosphate; sequence LFKGFPEGLL…MIIANFMTYL (122 aa). A coiled-coil region spans residues 528–558; the sequence is KGLNDELKKEIPFLRDLLDDADAQVQETVQS. In terms of domain architecture, KHA spans 591–662; it reads RVIIHGQAPP…LRENDHLYIF (72 aa).

The protein belongs to the potassium channel family. Plant (TC 1.A.1.4) subfamily. In terms of assembly, the potassium channel is probably composed of a homo- or heterotetrameric complex of pore-forming subunits. May interact with AKT1 and AKT2. Interacts with SLAC1. As to expression, expressed predominantly in root hairs and root endodermis and, at a lower level, in leaf nodes, trichomes, and hydathodes.

The protein resides in the membrane. Functionally, probable modulatory (alpha) subunit of inward-rectifying potassium channels. Could mediate potassium uptake from the soil solution by plant roots in association with AKT1. In Arabidopsis thaliana (Mouse-ear cress), this protein is Potassium channel KAT3 (KAT3).